Reading from the N-terminus, the 262-residue chain is Zinc import ATP-binding protein ZnuC (262 aa).

Residues 6–221 form the ABC transporter domain; it reads IRLDKVAVTL…PAFVELFGKN (216 aa). ATP is bound at residue 38 to 45; that stretch reads GPNGAGKT.

Belongs to the ABC transporter superfamily. Zinc importer (TC 3.A.1.15.5) family. In terms of assembly, the complex is composed of two ATP-binding proteins (ZnuC), two transmembrane proteins (ZnuB) and a solute-binding protein (ZnuA).

It localises to the cell inner membrane. The catalysed reaction is Zn(2+)(out) + ATP(in) + H2O(in) = Zn(2+)(in) + ADP(in) + phosphate(in) + H(+)(in). Functionally, part of the ABC transporter complex ZnuABC involved in zinc import. Responsible for energy coupling to the transport system. The polypeptide is Zinc import ATP-binding protein ZnuC (Pseudomonas syringae pv. syringae (strain B728a)).